Here is a 435-residue protein sequence, read N- to C-terminus: Kynurenine--oxoglutarate transaminase (435 aa).

Substrate contacts are provided by Gly46 and Asn198. Lys262 is subject to N6-(pyridoxal phosphate)lysine. Arg413 lines the substrate pocket.

Belongs to the class-I pyridoxal-phosphate-dependent aminotransferase family. Homodimer. The cofactor is pyridoxal 5'-phosphate.

It is found in the cytoplasm. The enzyme catalyses L-kynurenine + 2-oxoglutarate = kynurenate + L-glutamate + H2O. It catalyses the reaction 3-phenylpyruvate + L-glutamine = 2-oxoglutaramate + L-phenylalanine. The catalysed reaction is an S-substituted L-cysteine + H2O = a thiol + pyruvate + NH4(+). It participates in amino-acid degradation; L-kynurenine degradation; kynurenate from L-kynurenine: step 1/2. Functionally, catalyzes the irreversible transamination of the L-tryptophan metabolite L-kynurenine to form kynurenic acid (KA). Metabolizes the cysteine conjugates of certain halogenated alkenes and alkanes to form reactive metabolites. Catalyzes the beta-elimination of S-conjugates and Se-conjugates of L-(seleno)cysteine, resulting in the cleavage of the C-S or C-Se bond. This chain is Kynurenine--oxoglutarate transaminase (ccbl), found in Dictyostelium discoideum (Social amoeba).